We begin with the raw amino-acid sequence, 337 residues long: Methionyl-tRNA formyltransferase (337 aa).

Residue 110 to 113 (SLLP) coordinates (6S)-5,6,7,8-tetrahydrofolate.

The protein belongs to the Fmt family.

It carries out the reaction L-methionyl-tRNA(fMet) + (6R)-10-formyltetrahydrofolate = N-formyl-L-methionyl-tRNA(fMet) + (6S)-5,6,7,8-tetrahydrofolate + H(+). Attaches a formyl group to the free amino group of methionyl-tRNA(fMet). The formyl group appears to play a dual role in the initiator identity of N-formylmethionyl-tRNA by promoting its recognition by IF2 and preventing the misappropriation of this tRNA by the elongation apparatus. The polypeptide is Methionyl-tRNA formyltransferase (Frankia casuarinae (strain DSM 45818 / CECT 9043 / HFP020203 / CcI3)).